The sequence spans 492 residues: Protein odr-4 homolog (492 aa).

Positions 251-270 (LQPTSTTGGTATASSNTTDS) are disordered. Residues 254 to 268 (TSTTGGTATASSNTT) are compositionally biased toward low complexity. Residues 469–489 (MVGIAVALLVLLSSVALHFVL) form a helical membrane-spanning segment.

It belongs to the ODR-4 family.

It is found in the membrane. Functionally, may play a role in the trafficking of a subset of G-protein coupled receptors. The chain is Protein odr-4 homolog from Drosophila melanogaster (Fruit fly).